Consider the following 86-residue polypeptide: ATP synthase subunit c (86 aa).

2 helical membrane passes run 13–33 (FFATGLAYLGAGISILAAGLA) and 63–83 (ILGQAMVETSGIYALIIAFIL).

It belongs to the ATPase C chain family. As to quaternary structure, F-type ATPases have 2 components, F(1) - the catalytic core - and F(0) - the membrane proton channel. F(1) has five subunits: alpha(3), beta(3), gamma(1), delta(1), epsilon(1). F(0) has three main subunits: a(1), b(2) and c(10-14). The alpha and beta chains form an alternating ring which encloses part of the gamma chain. F(1) is attached to F(0) by a central stalk formed by the gamma and epsilon chains, while a peripheral stalk is formed by the delta and b chains.

It localises to the cell membrane. Its function is as follows. F(1)F(0) ATP synthase produces ATP from ADP in the presence of a proton or sodium gradient. F-type ATPases consist of two structural domains, F(1) containing the extramembraneous catalytic core and F(0) containing the membrane proton channel, linked together by a central stalk and a peripheral stalk. During catalysis, ATP synthesis in the catalytic domain of F(1) is coupled via a rotary mechanism of the central stalk subunits to proton translocation. Key component of the F(0) channel; it plays a direct role in translocation across the membrane. A homomeric c-ring of between 10-14 subunits forms the central stalk rotor element with the F(1) delta and epsilon subunits. The protein is ATP synthase subunit c of Acholeplasma laidlawii (strain PG-8A).